We begin with the raw amino-acid sequence, 202 residues long: Peptidyl-tRNA hydrolase (202 aa).

Tyr-19 serves as a coordination point for tRNA. His-24 functions as the Proton acceptor in the catalytic mechanism. TRNA is bound by residues Tyr-70, Asn-72, and Asn-118.

It belongs to the PTH family. In terms of assembly, monomer.

It is found in the cytoplasm. It carries out the reaction an N-acyl-L-alpha-aminoacyl-tRNA + H2O = an N-acyl-L-amino acid + a tRNA + H(+). Functionally, hydrolyzes ribosome-free peptidyl-tRNAs (with 1 or more amino acids incorporated), which drop off the ribosome during protein synthesis, or as a result of ribosome stalling. In terms of biological role, catalyzes the release of premature peptidyl moieties from peptidyl-tRNA molecules trapped in stalled 50S ribosomal subunits, and thus maintains levels of free tRNAs and 50S ribosomes. The chain is Peptidyl-tRNA hydrolase from Prochlorococcus marinus (strain NATL2A).